The primary structure comprises 205 residues: Phosphoribosyl-dephospho-CoA transferase (205 aa).

Active-site residues include Asp-134 and Asp-136.

It belongs to the MdcG family.

It catalyses the reaction apo-[malonate decarboxylase ACP] + 2'-(5''-triphospho-alpha-D-ribosyl)-3'-dephospho-CoA = holo-[malonate decarboxylase ACP] + diphosphate. Its function is as follows. Transfers 2'-(5-triphosphoribosyl)-3'-dephosphocoenzyme-A to the apo-[acyl-carrier-protein] of the malonate decarboxylase to yield holo-[acyl-carrier-protein]. This is Phosphoribosyl-dephospho-CoA transferase from Klebsiella pneumoniae subsp. pneumoniae (strain ATCC 700721 / MGH 78578).